The sequence spans 196 residues: Molybdenum cofactor guanylyltransferase (196 aa).

GTP contacts are provided by residues 10-12 (LAG), lysine 23, asparagine 51, aspartate 69, and aspartate 99. Aspartate 99 provides a ligand contact to Mg(2+).

The protein belongs to the MobA family. Monomer. It depends on Mg(2+) as a cofactor.

The protein localises to the cytoplasm. It catalyses the reaction Mo-molybdopterin + GTP + H(+) = Mo-molybdopterin guanine dinucleotide + diphosphate. Functionally, transfers a GMP moiety from GTP to Mo-molybdopterin (Mo-MPT) cofactor (Moco or molybdenum cofactor) to form Mo-molybdopterin guanine dinucleotide (Mo-MGD) cofactor. This Shewanella frigidimarina (strain NCIMB 400) protein is Molybdenum cofactor guanylyltransferase.